Here is a 210-residue protein sequence, read N- to C-terminus: Holliday junction resolvase RecU (210 aa).

Mg(2+) is bound by residues Thr-93, Asp-95, Glu-108, and Gln-127.

It belongs to the RecU family. Requires Mg(2+) as cofactor.

It localises to the cytoplasm. The enzyme catalyses Endonucleolytic cleavage at a junction such as a reciprocal single-stranded crossover between two homologous DNA duplexes (Holliday junction).. In terms of biological role, endonuclease that resolves Holliday junction intermediates in genetic recombination. Cleaves mobile four-strand junctions by introducing symmetrical nicks in paired strands. Promotes annealing of linear ssDNA with homologous dsDNA. Required for DNA repair, homologous recombination and chromosome segregation. In Lactobacillus helveticus (strain DPC 4571), this protein is Holliday junction resolvase RecU.